We begin with the raw amino-acid sequence, 171 residues long: S-ribosylhomocysteine lyase (171 aa).

Fe cation-binding residues include H54, H58, and C128.

Belongs to the LuxS family. As to quaternary structure, homodimer. Fe cation serves as cofactor.

The enzyme catalyses S-(5-deoxy-D-ribos-5-yl)-L-homocysteine = (S)-4,5-dihydroxypentane-2,3-dione + L-homocysteine. In terms of biological role, involved in the synthesis of autoinducer 2 (AI-2) which is secreted by bacteria and is used to communicate both the cell density and the metabolic potential of the environment. The regulation of gene expression in response to changes in cell density is called quorum sensing. Catalyzes the transformation of S-ribosylhomocysteine (RHC) to homocysteine (HC) and 4,5-dihydroxy-2,3-pentadione (DPD). This chain is S-ribosylhomocysteine lyase, found in Escherichia coli O81 (strain ED1a).